We begin with the raw amino-acid sequence, 791 residues long: Penicillin-binding protein 1A (791 aa).

Over 1–6 (MYKSLF) the chain is Cytoplasmic. Residues 7 to 27 (FCLKILALLFLIGCGIVAYII) traverse the membrane as a helical; Signal-anchor for type II membrane protein segment. Over 28–791 (YYYSRDLPDY…TEKDQSQEIY (764 aa)) the chain is Periplasmic. The tract at residues 49–220 (TRIYSRDGKL…SELNPEKNYA (172 aa)) is transglycosylase. The active-site Proton donor; for transglycosylase activity is the Glu87. A transpeptidase region spans residues 398-711 (DVIVVEPVKD…SSVVLPIFID (314 aa)). Residue Ser457 is the Acyl-ester intermediate; for transpeptidase activity of the active site.

In the N-terminal section; belongs to the glycosyltransferase 51 family. It in the C-terminal section; belongs to the transpeptidase family.

The protein localises to the cell inner membrane. The catalysed reaction is [GlcNAc-(1-&gt;4)-Mur2Ac(oyl-L-Ala-gamma-D-Glu-L-Lys-D-Ala-D-Ala)](n)-di-trans,octa-cis-undecaprenyl diphosphate + beta-D-GlcNAc-(1-&gt;4)-Mur2Ac(oyl-L-Ala-gamma-D-Glu-L-Lys-D-Ala-D-Ala)-di-trans,octa-cis-undecaprenyl diphosphate = [GlcNAc-(1-&gt;4)-Mur2Ac(oyl-L-Ala-gamma-D-Glu-L-Lys-D-Ala-D-Ala)](n+1)-di-trans,octa-cis-undecaprenyl diphosphate + di-trans,octa-cis-undecaprenyl diphosphate + H(+). It catalyses the reaction Preferential cleavage: (Ac)2-L-Lys-D-Ala-|-D-Ala. Also transpeptidation of peptidyl-alanyl moieties that are N-acyl substituents of D-alanine.. It participates in cell wall biogenesis; peptidoglycan biosynthesis. Its function is as follows. Cell wall formation. Synthesis of cross-linked peptidoglycan from the lipid intermediates. The enzyme has a penicillin-insensitive transglycosylase N-terminal domain (formation of linear glycan strands) and a penicillin-sensitive transpeptidase C-terminal domain (cross-linking of the peptide subunits). This Rickettsia bellii (strain RML369-C) protein is Penicillin-binding protein 1A (mrcA).